Here is a 415-residue protein sequence, read N- to C-terminus: Sphingomyelin synthase-related protein 1 (415 aa).

The SAM domain maps to 12 to 78 (WTTKHVAVWL…MLSVRKLQKI (67 aa)). 4 helical membrane passes run 153-173 (ILSC…MVIV), 201-221 (FAMT…VLLL), 232-252 (LCSL…VTSL), and 277-297 (FAIW…GDYM). His301 is a catalytic residue. A helical transmembrane segment spans residues 322-342 (FLHTLSWVLNLFGIFFILAAH). Residues His344 and Asp348 contribute to the active site. A helical transmembrane segment spans residues 347 to 367 (IDVFIAFYITTRLFLYYHTLA). Residues 368 to 415 (NTRAYQQSRRARIWFPMFSFFECNVNGTVPNEYCWPFSKPAIMKRLIG) are Cytoplasmic-facing.

It belongs to the sphingomyelin synthase family.

It is found in the endoplasmic reticulum membrane. It carries out the reaction an N-acylsphing-4-enine + a 1,2-diacyl-sn-glycero-3-phosphoethanolamine = an N-acylsphing-4-enine 1-phosphoethanolamine + a 1,2-diacyl-sn-glycerol. The enzyme catalyses an N-acylsphinganine + a 1,2-diacyl-sn-glycero-3-phosphoethanolamine = an N-acylsphinganine-1-phosphoethanolamine + a 1,2-diacyl-sn-glycerol. The catalysed reaction is an N-acyl-(4R)-4-hydroxysphinganine + a 1,2-diacyl-sn-glycero-3-phosphoethanolamine = an N-acyl-(4R)-4-hydroxysphinganine-1-phosphoethanolamine + a 1,2-diacyl-sn-glycerol. It catalyses the reaction N-hexadecanoylsphinganine + a 1,2-diacyl-sn-glycero-3-phosphoethanolamine = N-hexadecanoyl-sphinganine-1-phosphoethanolamine + a 1,2-diacyl-sn-glycerol. It carries out the reaction N-hexadecanoyl-(4R)-hydroxysphinganine + a 1,2-diacyl-sn-glycero-3-phosphoethanolamine = N-hexadecanoyl-(4R)-hydroxysphinganine-1-phosphoethanolamine + a 1,2-diacyl-sn-glycerol. It functions in the pathway sphingolipid metabolism. Synthesizes sphingolipids through transfer of a phosphatidyl head group from a glycerophospholipid on to the primary hydroxyl of a ceramide in the lumen of the endoplasmic reticulum. Catalyzes the synthesis of ceramide phosphoethanolamines (CPEs) (such as N-acylsphing-4-enine 1-phosphoethanolamine) by transferring phosphoethanolamine head group, which is smaller and more hydrophilic than the phosphocholine (PC) headgroup transferred in the canonical sphingomyelin synthesis (SMS) reaction by SMS1 or SMS2, from a phosphatidylethanolamine (1,2-diacyl-sn-glycero-3-phosphoethanolamine, PE) to a ceramide (such as N-acylsphing-4-enine). The larger PC prevents an efficient fit in the enzyme's catalytic pocket, leading to little or no SMS activity. In vitro, in the absence of ceramide, it has PLC activity with preference for phosphatidylinositol and phosphatidic acid, but also hydrolyzes phosphatidylethanolamine. The sequence is that of Sphingomyelin synthase-related protein 1 from Homo sapiens (Human).